The chain runs to 166 residues: NAD(P)H-quinone oxidoreductase subunit I, chloroplastic (166 aa).

4Fe-4S ferredoxin-type domains are found at residues 55 to 84 (GRIH…VDWK) and 95 to 124 (LNYS…MTEE). Cys64, Cys67, Cys70, Cys74, Cys104, Cys107, Cys110, and Cys114 together coordinate [4Fe-4S] cluster.

It belongs to the complex I 23 kDa subunit family. In terms of assembly, NDH is composed of at least 16 different subunits, 5 of which are encoded in the nucleus. It depends on [4Fe-4S] cluster as a cofactor.

The protein localises to the plastid. The protein resides in the chloroplast thylakoid membrane. It carries out the reaction a plastoquinone + NADH + (n+1) H(+)(in) = a plastoquinol + NAD(+) + n H(+)(out). The catalysed reaction is a plastoquinone + NADPH + (n+1) H(+)(in) = a plastoquinol + NADP(+) + n H(+)(out). Functionally, NDH shuttles electrons from NAD(P)H:plastoquinone, via FMN and iron-sulfur (Fe-S) centers, to quinones in the photosynthetic chain and possibly in a chloroplast respiratory chain. The immediate electron acceptor for the enzyme in this species is believed to be plastoquinone. Couples the redox reaction to proton translocation, and thus conserves the redox energy in a proton gradient. This is NAD(P)H-quinone oxidoreductase subunit I, chloroplastic from Chaetymenia peduncularis (Daisy).